The chain runs to 723 residues: ESX-1 secretion-associated protein EspK (723 aa).

2 disordered regions span residues 175–360 (DLLQ…TPAA) and 393–451 (SGAG…GTPV). The segment covering 200 to 209 (TPGTPITPGT) has biased composition (low complexity). Pro residues predominate over residues 210–229 (PITPIPGAPVTPITPTPGTP). The span at 230–249 (VTPVTPGKPVTPVTPVKPGT) shows a compositional bias: low complexity. Composition is skewed to pro residues over residues 250-265 (PGEP…PVAP) and 274-308 (PVTP…PSGP). Composition is skewed to low complexity over residues 309–319 (ATPGTPGGEPA), 393–404 (SGAGSHAATGRA), and 412–426 (AAAP…RTAP). Residues 432-444 (STDHIDKPDRSES) are compositionally biased toward basic and acidic residues.

It is found in the cytoplasm. May act as a chaperone that facilitates EspB secretion through an interaction with EccCb1. The sequence is that of ESX-1 secretion-associated protein EspK from Mycobacterium tuberculosis (strain CDC 1551 / Oshkosh).